Here is a 147-residue protein sequence, read N- to C-terminus: Signal peptidase complex subunit 3 (147 aa).

The Cytoplasmic portion of the chain corresponds to 1–6; that stretch reads MHSWVQ. A helical; Signal-anchor for type II membrane protein transmembrane segment spans residues 7 to 29; it reads RLLTTATTAALLLLAACCAASAL. The Lumenal segment spans residues 30–147; sequence DAFHVPSVQA…EFNLPDSYTS (118 aa).

It belongs to the SPCS3 family. As to quaternary structure, component of the signal peptidase complex (SPC) composed of a catalytic subunit SEC11 and three accessory subunits SPCS1, SPCS2 and SPCS3. The complex induces a local thinning of the ER membrane which is used to measure the length of the signal peptide (SP) h-region of protein substrates. This ensures the selectivity of the complex towards h-regions shorter than 18-20 amino acids.

It localises to the endoplasmic reticulum membrane. Functionally, essential component of the signal peptidase complex (SPC) which catalyzes the cleavage of N-terminal signal sequences from nascent proteins as they are translocated into the lumen of the endoplasmic reticulum. Essential for the SPC catalytic activity, possibly by stabilizing and positioning the active center of the complex close to the lumenal surface. The sequence is that of Signal peptidase complex subunit 3 from Oryza sativa subsp. japonica (Rice).